A 1342-amino-acid polypeptide reads, in one-letter code: DNA-directed RNA polymerase subunit beta (1342 aa).

This sequence belongs to the RNA polymerase beta chain family. In terms of assembly, the RNAP catalytic core consists of 2 alpha, 1 beta, 1 beta' and 1 omega subunit. When a sigma factor is associated with the core the holoenzyme is formed, which can initiate transcription.

The enzyme catalyses RNA(n) + a ribonucleoside 5'-triphosphate = RNA(n+1) + diphosphate. DNA-dependent RNA polymerase catalyzes the transcription of DNA into RNA using the four ribonucleoside triphosphates as substrates. This chain is DNA-directed RNA polymerase subunit beta, found in Tolumonas auensis (strain DSM 9187 / NBRC 110442 / TA 4).